The primary structure comprises 163 residues: Large ribosomal subunit protein uL13m (163 aa).

Serine 2 is subject to N-acetylserine. Positions 2-4 (SQK) are excised as a propeptide.

Belongs to the universal ribosomal protein uL13 family. Component of the mitochondrial large ribosomal subunit (mt-LSU). Mature yeast 74S mitochondrial ribosomes consist of a small (37S) and a large (54S) subunit. The 37S small subunit contains a 15S ribosomal RNA (15S mt-rRNA) and 34 different proteins. The 54S large subunit contains a 21S rRNA (21S mt-rRNA) and 46 different proteins.

The protein resides in the mitochondrion. Component of the mitochondrial ribosome (mitoribosome), a dedicated translation machinery responsible for the synthesis of mitochondrial genome-encoded proteins, including at least some of the essential transmembrane subunits of the mitochondrial respiratory chain. The mitoribosomes are attached to the mitochondrial inner membrane and translation products are cotranslationally integrated into the membrane. In Saccharomyces cerevisiae (strain ATCC 204508 / S288c) (Baker's yeast), this protein is Large ribosomal subunit protein uL13m (MRPL23).